Reading from the N-terminus, the 349-residue chain is Kelch domain-containing protein 9 (349 aa).

Kelch repeat units lie at residues 39–89, 91–137, and 325–349; these read RFYL…PVDG, WLCV…SHTC, and QLYLVGGFGEDGRTASPQVCILDFI.

In terms of assembly, interacts with CCNA1.

The sequence is that of Kelch domain-containing protein 9 (KLHDC9) from Homo sapiens (Human).